A 96-amino-acid polypeptide reads, in one-letter code: Glutamyl-tRNA(Gln) amidotransferase subunit C (96 aa).

This sequence belongs to the GatC family. In terms of assembly, heterotrimer of A, B and C subunits.

The catalysed reaction is L-glutamyl-tRNA(Gln) + L-glutamine + ATP + H2O = L-glutaminyl-tRNA(Gln) + L-glutamate + ADP + phosphate + H(+). It carries out the reaction L-aspartyl-tRNA(Asn) + L-glutamine + ATP + H2O = L-asparaginyl-tRNA(Asn) + L-glutamate + ADP + phosphate + 2 H(+). Functionally, allows the formation of correctly charged Asn-tRNA(Asn) or Gln-tRNA(Gln) through the transamidation of misacylated Asp-tRNA(Asn) or Glu-tRNA(Gln) in organisms which lack either or both of asparaginyl-tRNA or glutaminyl-tRNA synthetases. The reaction takes place in the presence of glutamine and ATP through an activated phospho-Asp-tRNA(Asn) or phospho-Glu-tRNA(Gln). This Halalkalibacterium halodurans (strain ATCC BAA-125 / DSM 18197 / FERM 7344 / JCM 9153 / C-125) (Bacillus halodurans) protein is Glutamyl-tRNA(Gln) amidotransferase subunit C.